Consider the following 337-residue polypeptide: Fructose-1,6-bisphosphatase class 1 (337 aa).

Positions 89, 112, 114, and 115 each coordinate Mg(2+). Residues D115–S118, N208, Y241, and K271 each bind substrate. E277 is a binding site for Mg(2+).

This sequence belongs to the FBPase class 1 family. In terms of assembly, homotetramer. It depends on Mg(2+) as a cofactor.

It is found in the cytoplasm. The catalysed reaction is beta-D-fructose 1,6-bisphosphate + H2O = beta-D-fructose 6-phosphate + phosphate. It functions in the pathway carbohydrate biosynthesis; gluconeogenesis. This chain is Fructose-1,6-bisphosphatase class 1, found in Yersinia pestis bv. Antiqua (strain Antiqua).